The following is a 441-amino-acid chain: ATP-dependent RNA helicase sub2 (441 aa).

Residues 23 to 32 (TTAAPAANGD) are compositionally biased toward low complexity. The tract at residues 23–42 (TTAAPAANGDAAKKGDLTVS) is disordered. The Q motif motif lies at 58 to 86 (TGFRDFLLKGELLRAITDCGFEHPSEVQQ). The Helicase ATP-binding domain occupies 89–264 (IPTAILNVDV…KKFMRNPLEV (176 aa)). 102 to 109 (AKSGLGKT) lines the ATP pocket. The DECD box signature appears at 211-214 (DECD). Residues 292-437 (KLNELLDSLE…EYPEGGVDSS (146 aa)) enclose the Helicase C-terminal domain.

It belongs to the DEAD box helicase family. DECD subfamily.

The protein resides in the nucleus. The enzyme catalyses ATP + H2O = ADP + phosphate + H(+). ATP-binding RNA helicase involved in transcription elongation and required for the export of mRNA out of the nucleus. SUB2 also plays a role in pre-mRNA splicing and spliceosome assembly. May be involved in rDNA and telomeric silencing, and maintenance of genome integrity. This is ATP-dependent RNA helicase sub2 (sub2) from Aspergillus oryzae (strain ATCC 42149 / RIB 40) (Yellow koji mold).